Here is a 721-residue protein sequence, read N- to C-terminus: Polyribonucleotide nucleotidyltransferase (721 aa).

Mg(2+)-binding residues include D485 and D491. The KH domain maps to 552–611; sequence PKIYIVKIHPDKIREIIGPGGKVIRELQAMSNTRIEVDDSGTVKIAASTEEEARIAIKAV. The region spanning 621 to 689 is the S1 motif domain; it reads GEIYEGEVVR…PEGKIRLSRK (69 aa). The disordered stretch occupies residues 687 to 721; it reads SRKALLPAPEKGEEDEKSAPRSRRPGGNSDRRNNR.

Belongs to the polyribonucleotide nucleotidyltransferase family. Requires Mg(2+) as cofactor.

It is found in the cytoplasm. It carries out the reaction RNA(n+1) + phosphate = RNA(n) + a ribonucleoside 5'-diphosphate. Functionally, involved in mRNA degradation. Catalyzes the phosphorolysis of single-stranded polyribonucleotides processively in the 3'- to 5'-direction. The polypeptide is Polyribonucleotide nucleotidyltransferase (Desulfosudis oleivorans (strain DSM 6200 / JCM 39069 / Hxd3) (Desulfococcus oleovorans)).